A 212-amino-acid chain; its full sequence is Pyridoxine/pyridoxamine 5'-phosphate oxidase (212 aa).

Substrate-binding positions include 8–11 and Lys66; that span reads RREY. FMN contacts are provided by residues 61-66, 76-77, Arg82, Lys83, and Gln105; these read RIVLLK and FT. Positions 123, 127, and 131 each coordinate substrate. FMN is bound by residues 140–141 and Trp185; that span reads QS. 191–193 contacts substrate; sequence RLH. Arg195 is a binding site for FMN.

It belongs to the pyridoxamine 5'-phosphate oxidase family. Homodimer. FMN serves as cofactor.

It carries out the reaction pyridoxamine 5'-phosphate + O2 + H2O = pyridoxal 5'-phosphate + H2O2 + NH4(+). The enzyme catalyses pyridoxine 5'-phosphate + O2 = pyridoxal 5'-phosphate + H2O2. Its pathway is cofactor metabolism; pyridoxal 5'-phosphate salvage; pyridoxal 5'-phosphate from pyridoxamine 5'-phosphate: step 1/1. It functions in the pathway cofactor metabolism; pyridoxal 5'-phosphate salvage; pyridoxal 5'-phosphate from pyridoxine 5'-phosphate: step 1/1. Functionally, catalyzes the oxidation of either pyridoxine 5'-phosphate (PNP) or pyridoxamine 5'-phosphate (PMP) into pyridoxal 5'-phosphate (PLP). The chain is Pyridoxine/pyridoxamine 5'-phosphate oxidase from Shewanella denitrificans (strain OS217 / ATCC BAA-1090 / DSM 15013).